The chain runs to 355 residues: 3-dehydroquinate synthase (355 aa).

NAD(+) is bound by residues 71 to 76 (EGEERK), 105 to 109 (GVVGD), 129 to 130 (TS), K142, and K151. Zn(2+) is bound by residues E184, H246, and H263.

This sequence belongs to the sugar phosphate cyclases superfamily. Dehydroquinate synthase family. NAD(+) serves as cofactor. Requires Co(2+) as cofactor. It depends on Zn(2+) as a cofactor.

It is found in the cytoplasm. It carries out the reaction 7-phospho-2-dehydro-3-deoxy-D-arabino-heptonate = 3-dehydroquinate + phosphate. It participates in metabolic intermediate biosynthesis; chorismate biosynthesis; chorismate from D-erythrose 4-phosphate and phosphoenolpyruvate: step 2/7. Functionally, catalyzes the conversion of 3-deoxy-D-arabino-heptulosonate 7-phosphate (DAHP) to dehydroquinate (DHQ). The polypeptide is 3-dehydroquinate synthase (Streptococcus pneumoniae serotype 4 (strain ATCC BAA-334 / TIGR4)).